Reading from the N-terminus, the 174-residue chain is Gamma-crystallin E (174 aa).

Beta/gamma crystallin 'Greek key' domains lie at 2–40 (GKIT…RVDS) and 41–83 (GCWM…RLIP). The interval 84–87 (HSSS) is connecting peptide. 2 consecutive Beta/gamma crystallin 'Greek key' domains span residues 88–128 (HRIK…HVME) and 129–171 (GYWV…RRIM).

The protein belongs to the beta/gamma-crystallin family. In terms of tissue distribution, detected in the superior olivary complex of the auditory hindbrain.

Functionally, crystallins are the dominant structural components of the vertebrate eye lens. This is Gamma-crystallin E (Cryge) from Mus musculus (Mouse).